A 71-amino-acid polypeptide reads, in one-letter code: uncharacterized protein (71 aa).

The disordered stretch occupies residues 52–71 (KEKFERKEDEKSKPKGVRED).

This is an uncharacterized protein from Archaeoglobus fulgidus (strain ATCC 49558 / DSM 4304 / JCM 9628 / NBRC 100126 / VC-16).